We begin with the raw amino-acid sequence, 392 residues long: Vascular endothelial growth factor A, long form (392 aa).

Disordered regions lie at residues 1–44 and 73–174; these read MTDR…VEGV and DKPI…GPGR. Residues 89–104 are compositionally biased toward basic and acidic residues; it reads PGPEKRGEEEKEEERG. Composition is skewed to low complexity over residues 121–143 and 158–174; these read AAVC…ASVP and PRSP…GPGR. Cystine bridges form between Cys229-Cys271, Cys260-Cys305, and Cys264-Cys307. A glycan (N-linked (GlcNAc...) asparagine) is linked at Asn278. The segment covering 309–320 has biased composition (basic and acidic residues); sequence PKKDRTKPEKKS. The tract at residues 309–337 is disordered; that stretch reads PKKDRTKPEKKSVRGKGKGQKRKRKKSRF. The segment covering 321–337 has biased composition (basic residues); sequence VRGKGKGQKRKRKKSRF.

The protein belongs to the PDGF/VEGF growth factor family. As to quaternary structure, homodimer; disulfide-linked. Also found as heterodimer with PGF. Interacts with NRP1. Interacts with isoform 2 of BSG. Interacts with CD82; this interaction inhibits VEGFA-mediated signaling pathway. Produced by use of an alternative upstream CUG codon and post-translationally processed into the N-terminal N-VEGF form and the C-terminal secreted VEGFA form. In developing embryos, expressed mainly in the choroid plexus, paraventricular neuroepithelium, placenta and kidney glomeruli. Also found in bronchial epithelium, adrenal gland and in seminiferous tubules of testis. High expression continues in kidney glomeruli and choroid plexus in adults.

The protein localises to the cytoplasm. It is found in the nucleus. It localises to the secreted. Its subcellular location is the endoplasmic reticulum. The protein resides in the golgi apparatus. The protein localises to the extracellular space. It is found in the extracellular matrix. It localises to the cell membrane. Functionally, participates in the induction of key genes involved in the response to hypoxia and in the induction of angiogenesis such as HIF1A. Involved in protecting cells from hypoxia-mediated cell death. Growth factor active in angiogenesis, vasculogenesis and endothelial cell growth. Induces endothelial cell proliferation, promotes cell migration, inhibits apoptosis and induces permeabilization of blood vessels. Binds to the FLT1/VEGFR1 and KDR/VEGFR2 receptors, heparan sulfate and heparin. Binds to the NRP1/neuropilin-1 receptor. Binding to NRP1 receptor initiates a signaling pathway needed for motor neuron axon guidance and cell body migration, including for the caudal migration of facial motor neurons from rhombomere 4 to rhombomere 6 during embryonic development. Also binds the DEAR/FBXW7-AS1 receptor. May play a role in increasing vascular permeability during lactation, when increased transport of molecules from the blood is required for efficient milk protein synthesis. The sequence is that of Vascular endothelial growth factor A, long form (Vegfa) from Mus musculus (Mouse).